The chain runs to 510 residues: ATP synthase subunit alpha, chloroplastic (510 aa).

170–177 is a binding site for ATP; that stretch reads GDRQTGKT.

Belongs to the ATPase alpha/beta chains family. In terms of assembly, F-type ATPases have 2 components, CF(1) - the catalytic core - and CF(0) - the membrane proton channel. CF(1) has five subunits: alpha(3), beta(3), gamma(1), delta(1), epsilon(1). CF(0) has four main subunits: a, b, b' and c.

Its subcellular location is the plastid. It is found in the chloroplast thylakoid membrane. It carries out the reaction ATP + H2O + 4 H(+)(in) = ADP + phosphate + 5 H(+)(out). Produces ATP from ADP in the presence of a proton gradient across the membrane. The alpha chain is a regulatory subunit. The sequence is that of ATP synthase subunit alpha, chloroplastic from Lotus japonicus (Lotus corniculatus var. japonicus).